Reading from the N-terminus, the 66-residue chain is Large ribosomal subunit protein bL33c (66 aa).

The protein belongs to the bacterial ribosomal protein bL33 family.

The protein localises to the plastid. It localises to the chloroplast. The chain is Large ribosomal subunit protein bL33c from Agrostis stolonifera (Creeping bentgrass).